The following is a 349-amino-acid chain: tRNA pseudouridine synthase D (349 aa).

Substrate is bound at residue Phe-27. Catalysis depends on Asp-80, which acts as the Nucleophile. Position 129 (Asn-129) interacts with substrate. The 149-residue stretch at 155 to 303 (GVPNYFGAQR…VEAARRAMLL (149 aa)) folds into the TRUD domain. Phe-329 contacts substrate.

It belongs to the pseudouridine synthase TruD family.

The catalysed reaction is uridine(13) in tRNA = pseudouridine(13) in tRNA. Its function is as follows. Responsible for synthesis of pseudouridine from uracil-13 in transfer RNAs. This Escherichia coli O9:H4 (strain HS) protein is tRNA pseudouridine synthase D.